Consider the following 157-residue polypeptide: Transcriptional regulator MraZ (157 aa).

2 SpoVT-AbrB domains span residues Thr-7–Leu-54 and Thr-83–Arg-126.

It belongs to the MraZ family. In terms of assembly, forms oligomers.

It is found in the cytoplasm. Its subcellular location is the nucleoid. The chain is Transcriptional regulator MraZ from Azorhizobium caulinodans (strain ATCC 43989 / DSM 5975 / JCM 20966 / LMG 6465 / NBRC 14845 / NCIMB 13405 / ORS 571).